A 395-amino-acid chain; its full sequence is 1-deoxy-D-xylulose 5-phosphate reductoisomerase (395 aa).

7 residues coordinate NADPH: Thr-15, Gly-16, Ser-17, Ile-18, Gly-41, Asn-43, and Asn-126. Residue Lys-127 coordinates 1-deoxy-D-xylulose 5-phosphate. Position 128 (Glu-128) interacts with NADPH. Residue Asp-152 participates in Mn(2+) binding. 1-deoxy-D-xylulose 5-phosphate contacts are provided by Ser-153, Glu-154, Ser-178, and His-201. Glu-154 serves as a coordination point for Mn(2+). Gly-207 contacts NADPH. Ser-214, Asn-219, Lys-220, and Glu-223 together coordinate 1-deoxy-D-xylulose 5-phosphate. Mn(2+) is bound at residue Glu-223.

This sequence belongs to the DXR family. It depends on Mg(2+) as a cofactor. Mn(2+) serves as cofactor.

It catalyses the reaction 2-C-methyl-D-erythritol 4-phosphate + NADP(+) = 1-deoxy-D-xylulose 5-phosphate + NADPH + H(+). It functions in the pathway isoprenoid biosynthesis; isopentenyl diphosphate biosynthesis via DXP pathway; isopentenyl diphosphate from 1-deoxy-D-xylulose 5-phosphate: step 1/6. In terms of biological role, catalyzes the NADPH-dependent rearrangement and reduction of 1-deoxy-D-xylulose-5-phosphate (DXP) to 2-C-methyl-D-erythritol 4-phosphate (MEP). This chain is 1-deoxy-D-xylulose 5-phosphate reductoisomerase, found in Ruegeria pomeroyi (strain ATCC 700808 / DSM 15171 / DSS-3) (Silicibacter pomeroyi).